The sequence spans 349 residues: Desmethyl-yatein O-methyltransferase (349 aa).

Residues G193, D216, D236, M237, M249, and K250 each coordinate S-adenosyl-L-homocysteine. The Proton acceptor role is filled by H254. Active-site residues include E282 and E314.

This sequence belongs to the class I-like SAM-binding methyltransferase superfamily. Cation-independent O-methyltransferase family. COMT subfamily. In terms of assembly, homodimer. As to expression, mostly expressed in stems, and, to a lower extent, in leaves.

It catalyses the reaction (-)-5'-demethylyatein + S-adenosyl-L-methionine = (-)-yatein + S-adenosyl-L-homocysteine + H(+). The protein operates within aromatic compound metabolism; phenylpropanoid biosynthesis. Functionally, O-methyltransferase involved in the biosynthesis of etoposide, a chemotherapeutic compound of the topoisomerase inhibitor family. Catalyzes the methylation of (-)-5'-demethylyatein to produce (-)-yatein. The polypeptide is Desmethyl-yatein O-methyltransferase (Sinopodophyllum hexandrum (Himalayan may apple)).